Consider the following 37-residue polypeptide: Large ribosomal subunit protein bL36c (37 aa).

It belongs to the bacterial ribosomal protein bL36 family.

It localises to the plastid. The protein resides in the chloroplast. This chain is Large ribosomal subunit protein bL36c, found in Pinus koraiensis (Korean pine).